The chain runs to 436 residues: UPF0597 protein YhaM (436 aa).

Belongs to the UPF0597 family.

This chain is UPF0597 protein YhaM, found in Salmonella dublin (strain CT_02021853).